The following is a 725-amino-acid chain: ATP-dependent DNA helicase II subunit 2 (725 aa).

A Ku domain is found at 232–478 (LTLGDPQKYP…QQAMSDYVDA (247 aa)).

Belongs to the ku80 family. Heterodimer of mus-51/ku70 and mus-52/ku80.

Its subcellular location is the nucleus. The protein localises to the chromosome. It localises to the telomere. It carries out the reaction ATP + H2O = ADP + phosphate + H(+). Its function is as follows. Single-stranded DNA-dependent ATP-dependent helicase. Involved in non-homologous end joining (NHEJ) DNA double strand break repair. DNA-binding is sequence-independent but has a high affinity to nicks in double-stranded DNA and to the ends of duplex DNA. Binds to naturally occurring chromosomal ends, and therefore provides chromosomal end protection. Required also for telomere recombination to repair telomeric ends in the absence of telomerase. ku70, of the ku70/ku80 heterodimer, binds to the stem loop of tlc1, the RNA component of telomerase. Involved in telomere maintenance. Interacts with telomeric repeats and subtelomeric sequences thereby controlling telomere length and protecting against subtelomeric rearrangement. Maintains telomeric chromatin, which is involved in silencing the expression of genes located at the telomere. Required for mating-type switching. The chain is ATP-dependent DNA helicase II subunit 2 (mus-52) from Neurospora crassa (strain ATCC 24698 / 74-OR23-1A / CBS 708.71 / DSM 1257 / FGSC 987).